Consider the following 490-residue polypeptide: Ribulose bisphosphate carboxylase large chain (490 aa).

Substrate-binding residues include asparagine 127 and threonine 177. Catalysis depends on lysine 179, which acts as the Proton acceptor. Lysine 181 is a substrate binding site. Residues lysine 205, aspartate 207, and glutamate 208 each coordinate Mg(2+). The residue at position 205 (lysine 205) is an N6-carboxylysine. Histidine 297 acts as the Proton acceptor in catalysis. Substrate is bound by residues arginine 298, histidine 330, and serine 382.

Belongs to the RuBisCO large chain family. Type I subfamily. In terms of assembly, heterohexadecamer of 8 large chains and 8 small chains. It depends on Mg(2+) as a cofactor.

The protein resides in the plastid. The protein localises to the chloroplast. The catalysed reaction is 2 (2R)-3-phosphoglycerate + 2 H(+) = D-ribulose 1,5-bisphosphate + CO2 + H2O. It catalyses the reaction D-ribulose 1,5-bisphosphate + O2 = 2-phosphoglycolate + (2R)-3-phosphoglycerate + 2 H(+). Functionally, ruBisCO catalyzes two reactions: the carboxylation of D-ribulose 1,5-bisphosphate, the primary event in carbon dioxide fixation, as well as the oxidative fragmentation of the pentose substrate in the photorespiration process. Both reactions occur simultaneously and in competition at the same active site. In Thalassiosira pseudonana (Marine diatom), this protein is Ribulose bisphosphate carboxylase large chain.